Consider the following 260-residue polypeptide: Acetylglutamate kinase (260 aa).

Residues 45–46 (GG), Arg-67, and Asn-159 each bind substrate.

It belongs to the acetylglutamate kinase family. ArgB subfamily.

It localises to the cytoplasm. It catalyses the reaction N-acetyl-L-glutamate + ATP = N-acetyl-L-glutamyl 5-phosphate + ADP. It functions in the pathway amino-acid biosynthesis; L-arginine biosynthesis; N(2)-acetyl-L-ornithine from L-glutamate: step 2/4. Catalyzes the ATP-dependent phosphorylation of N-acetyl-L-glutamate. The sequence is that of Acetylglutamate kinase from Aliivibrio fischeri (strain ATCC 700601 / ES114) (Vibrio fischeri).